Here is a 115-residue protein sequence, read N- to C-terminus: MNAPPAFESFLLFEGEKITINKDTKVPNACLFTINKEDHTLGNIIKSQLLKDPQVLFAGYKVPHPLEHKIIIRVQTTPDYSPQEAFTNAITDLISELSLLEERFRTCLLPLRLLP.

It belongs to the archaeal Rpo11/eukaryotic RPB11/RPC19 RNA polymerase subunit family. As to quaternary structure, component of the RNA polymerase II (Pol II) complex consisting of 12 subunits.

The protein resides in the nucleus. Functionally, DNA-dependent RNA polymerase catalyzes the transcription of DNA into RNA using the four ribonucleoside triphosphates as substrates. Component of RNA polymerase II which synthesizes mRNA precursors and many functional non-coding RNAs. Pol II is the central component of the basal RNA polymerase II transcription machinery. It is composed of mobile elements that move relative to each other. RPB11 is part of the core element with the central large cleft. The sequence is that of DNA-directed RNA polymerase II subunit RPB11-b2 (POLR2J3) from Homo sapiens (Human).